Consider the following 627-residue polypeptide: MIRYTVAGHSRRCVVGASKRVGAIKCITVAATKRFISNKSNEVFTKLTNDNDPKRDAFFKYTWGSWLKNDKQEKEKRFTKFSIEGLNRILNDIYIQSNEMAKAPDGKILPPVFNKNLTVSLVNNVVPKNIGKINPNEKVQVTTLSSIHEGKHHRIYKVDTNLNKAFILRIPYPLENENTLSYRIRSEVATMDFADLKLGIKVPKIFCYGVNSLNPVRQPFVLQEFIEGELLMKDWDPLIEDGSSNQKKYDNVIKQVSDFQSKLVSLKLNAFGSIYFNNDLKDGNEKEFVKEDIYDGETNPDLQNRWKIGPSVERCLWRHKSHLDFHKQMKPFLGPWPKKSPMDIIKNTGLLEAENAKTRIAMKEAGSSAELMYPRTLKEQITTYENLAKIAPDLFNVKTKAIPNMQELLSPRLFHPDLDPMNIIVNKEAQEAYLLDFEGACTKPFILQNSPQFIAYDGPKIYDLKEDITDFDKLSEAEKVQYQFMYKRTRNQHQWEKKLNDNNPKLITAVAPPVKLLRSPYIAAVERKTEEEYLLIDESLLQLKEVWDIFAQNDLVNQKKFPLNYSKEDIERHVEDLQKLHEKLISTPFAATQGWIPQDMFDQLLNSGSIVKQENGDYTVKQPEATK.

Residues Met-1–Val-43 constitute a mitochondrion transit peptide.

Belongs to the AIM9 family.

Its subcellular location is the mitochondrion. This is Altered inheritance of mitochondria protein 9, mitochondrial (AIM9) from Saccharomyces cerevisiae (strain JAY291) (Baker's yeast).